We begin with the raw amino-acid sequence, 25 residues long: Alpha-lytic protease (25 aa).

The protein belongs to the peptidase S1 family.

It catalyses the reaction Preferential cleavage: Ala-|-Xaa, Val-|-Xaa in bacterial cell walls, elastin and other proteins.. The sequence is that of Alpha-lytic protease from Achromobacter lyticus.